The primary structure comprises 192 residues: Phosphoheptose isomerase (192 aa).

The SIS domain occupies 35–192 (LIETLENQGK…CIERHFAHKN (158 aa)). 50–52 (NGG) is a binding site for substrate. Histidine 59 and glutamate 63 together coordinate Zn(2+). Substrate-binding positions include glutamate 63, 92–93 (ND), 118–120 (STS), serine 123, and glutamine 170. Positions 170 and 178 each coordinate Zn(2+).

It belongs to the SIS family. GmhA subfamily. As to quaternary structure, homotetramer. Zn(2+) is required as a cofactor.

The protein resides in the cytoplasm. The enzyme catalyses 2 D-sedoheptulose 7-phosphate = D-glycero-alpha-D-manno-heptose 7-phosphate + D-glycero-beta-D-manno-heptose 7-phosphate. It participates in carbohydrate biosynthesis; D-glycero-D-manno-heptose 7-phosphate biosynthesis; D-glycero-alpha-D-manno-heptose 7-phosphate and D-glycero-beta-D-manno-heptose 7-phosphate from sedoheptulose 7-phosphate: step 1/1. Its function is as follows. Catalyzes the isomerization of sedoheptulose 7-phosphate in D-glycero-D-manno-heptose 7-phosphate. The protein is Phosphoheptose isomerase of Helicobacter pylori (strain P12).